We begin with the raw amino-acid sequence, 398 residues long: Stabilizer of axonemal microtubules 2 (398 aa).

Mn regions lie at residues 114-126 (STTFQDDFVPQEI), 148-162 (ITSHRLDYIPHQLEL), 248-260 (NSTSHLDYVPYQA), 282-296 (KSIMKEDFPAWESCR), 316-328 (LSTFRSHYVPHEL), and 350-364 (VTMYSVEYTPKRQEI).

This sequence belongs to the FAM154 family.

The sequence is that of Stabilizer of axonemal microtubules 2 (SAXO2) from Homo sapiens (Human).